The sequence spans 600 residues: DNA mismatch repair protein MutL (600 aa).

Belongs to the DNA mismatch repair MutL/HexB family.

Functionally, this protein is involved in the repair of mismatches in DNA. It is required for dam-dependent methyl-directed DNA mismatch repair. May act as a 'molecular matchmaker', a protein that promotes the formation of a stable complex between two or more DNA-binding proteins in an ATP-dependent manner without itself being part of a final effector complex. In Sinorhizobium fredii (strain NBRC 101917 / NGR234), this protein is DNA mismatch repair protein MutL.